Here is a 281-residue protein sequence, read N- to C-terminus: GDT1-like protein 4 (281 aa).

The N-terminal stretch at Met1 to Ala22 is a signal peptide. Helical transmembrane passes span Ala66 to Ile86, Thr105 to Gly125, Thr137 to Trp157, Ile188 to Glu208, Ala226 to Val246, and Gly258 to Tyr278.

It belongs to the GDT1 family.

It is found in the membrane. This is GDT1-like protein 4 from Oryza sativa subsp. indica (Rice).